The sequence spans 194 residues: ATP-dependent Clp protease proteolytic subunit (194 aa).

The active-site Nucleophile is the Ser97. His122 is a catalytic residue.

The protein belongs to the peptidase S14 family. As to quaternary structure, fourteen ClpP subunits assemble into 2 heptameric rings which stack back to back to give a disk-like structure with a central cavity, resembling the structure of eukaryotic proteasomes.

Its subcellular location is the cytoplasm. The enzyme catalyses Hydrolysis of proteins to small peptides in the presence of ATP and magnesium. alpha-casein is the usual test substrate. In the absence of ATP, only oligopeptides shorter than five residues are hydrolyzed (such as succinyl-Leu-Tyr-|-NHMec, and Leu-Tyr-Leu-|-Tyr-Trp, in which cleavage of the -Tyr-|-Leu- and -Tyr-|-Trp bonds also occurs).. In terms of biological role, cleaves peptides in various proteins in a process that requires ATP hydrolysis. Has a chymotrypsin-like activity. Plays a major role in the degradation of misfolded proteins. The sequence is that of ATP-dependent Clp protease proteolytic subunit from Lactobacillus delbrueckii subsp. bulgaricus (strain ATCC BAA-365 / Lb-18).